The following is a 367-amino-acid chain: Centromere protein L (367 aa).

This sequence belongs to the CENP-L/IML3 family.

The protein localises to the nucleus. The protein resides in the chromosome. It is found in the centromere. Its function is as follows. Probable component of a centromeric complex involved in assembly of kinetochore proteins, mitotic progression and chromosome segregation. The polypeptide is Centromere protein L (cenpl) (Danio rerio (Zebrafish)).